A 391-amino-acid polypeptide reads, in one-letter code: MSETTARRDADAVLRARAEIDLAALRANVRALRERAPGAALMAVVKADAYGHGAIPCARAAVAAGATWLGTATPQEALALRAAEPGLPDDVRIMCWLWTPGGPWREAVEARLDVSVSAMWAMEEVTGAARAAGVPARVQLKADTGLGRGGCQPGADWERLVGAALRAEEEGLLRVTGLWSHFACADEPGHPSIAAQLTRFREMTAYAEQRGLRPEVRHIANSPATLTLPDAHFDLVRPGIAMYGVSPSPEIGTPADFGLRPVMTLAASLALVKQVPGGHGVSYGHHYTTPGETTLGLVPLGYADGIPRHASSSGPVLVDGKWRTVAGRIAMDQFVVDLGGDRPEPGAEAVLFGPGDRGEPTAEDWAQAAGTIAYEIVTRIGSRVPRVYVNE.

The active-site Proton acceptor; specific for D-alanine is Lys46. Lys46 bears the N6-(pyridoxal phosphate)lysine mark. Substrate is bound at residue Arg148. Catalysis depends on Tyr283, which acts as the Proton acceptor; specific for L-alanine. A substrate-binding site is contributed by Met331.

This sequence belongs to the alanine racemase family. Pyridoxal 5'-phosphate is required as a cofactor.

The enzyme catalyses L-alanine = D-alanine. Its pathway is amino-acid biosynthesis; D-alanine biosynthesis; D-alanine from L-alanine: step 1/1. Its function is as follows. Catalyzes the interconversion of L-alanine and D-alanine. May also act on other amino acids. This Streptomyces coelicolor (strain ATCC BAA-471 / A3(2) / M145) protein is Alanine racemase (alr).